The sequence spans 379 residues: Elongation factor Ts, mitochondrial (379 aa).

The N-terminal 45 residues, 1–45 (MALYRTARRPLQMMLFSRLGNPEQNYSSWARKDASQSAFGMFVRL), are a transit peptide targeting the mitochondrion.

This sequence belongs to the EF-Ts family.

The protein resides in the mitochondrion. In terms of biological role, associates with the EF-Tu.GDP complex and induces the exchange of GDP to GTP. It remains bound to the aminoacyl-tRNA.EF-Tu.GTP complex up to the GTP hydrolysis stage on the ribosome. This is Elongation factor Ts, mitochondrial from Ricinus communis (Castor bean).